We begin with the raw amino-acid sequence, 164 residues long: Small ribosomal subunit protein uS5 (164 aa).

The S5 DRBM domain maps to 9-72 (YQEKLLKISR…AAAKKNIVKI (64 aa)).

It belongs to the universal ribosomal protein uS5 family. Part of the 30S ribosomal subunit. Contacts proteins S4 and S8.

In terms of biological role, with S4 and S12 plays an important role in translational accuracy. Located at the back of the 30S subunit body where it stabilizes the conformation of the head with respect to the body. In Fusobacterium nucleatum subsp. nucleatum (strain ATCC 25586 / DSM 15643 / BCRC 10681 / CIP 101130 / JCM 8532 / KCTC 2640 / LMG 13131 / VPI 4355), this protein is Small ribosomal subunit protein uS5.